A 575-amino-acid polypeptide reads, in one-letter code: Homocysteine/cysteine synthase (575 aa).

Position 376 is an N6-(pyridoxal phosphate)lysine (lysine 376).

Belongs to the trans-sulfuration enzymes family. MET7 subfamily. Pyridoxal 5'-phosphate is required as a cofactor.

It localises to the cytoplasm. It catalyses the reaction O-acetyl-L-homoserine + methanethiol = L-methionine + acetate + H(+). The enzyme catalyses O-acetyl-L-homoserine + hydrogen sulfide = L-homocysteine + acetate. The catalysed reaction is O-acetyl-L-serine + hydrogen sulfide = L-cysteine + acetate. It functions in the pathway amino-acid biosynthesis; L-methionine biosynthesis via de novo pathway; L-homocysteine from O-acetyl-L-homoserine. Its function is as follows. Plays a role in inorganic sulfur assimilation during sulfur-limited conditions; catalyzes the conversion of O-acetyl-L-homoserine (OAH) into homocysteine in the methionine biosynthesis pathway. Also catalyzes the conversion of O-acetylserine (OAS) into cysteine, the last step in the cysteine biosynthesis pathway. However, it seems that in S.cerevisiae cysteine biosynthesis occurs exclusively through the cystathionine pathway and not via direct incorporation of sulfur into OAS. It therefore has no metabolic role in cysteine biosynthesis and may only have a regulatory role controlling OAS levels. This Saccharomyces cerevisiae (strain ATCC 204508 / S288c) (Baker's yeast) protein is Homocysteine/cysteine synthase.